A 283-amino-acid polypeptide reads, in one-letter code: Transmembrane protein 119 (283 aa).

An N-terminal signal peptide occupies residues Met1–Ala25. The Extracellular portion of the chain corresponds to Arg26–Met96. Ser41 carries an O-linked (Xyl...) (chondroitin sulfate) serine glycan. The span at Glu43–Pro52 shows a compositional bias: low complexity. Residues Glu43–Gly76 are disordered. A helical transmembrane segment spans residues Leu97–Ile117. Topologically, residues Thr118–Val283 are cytoplasmic. 2 disordered regions span residues Lys136–Ser168 and Leu183–Val283. Basic and acidic residues-rich tracts occupy residues Val153 to Glu164 and Arg198 to Gln213. Positions Gly238–Gln264 are enriched in low complexity. Ser272 is subject to Phosphoserine.

Interacts with SMAD1, SMAD5 and RUNX2. Expressed in brain microglia (at protein level). Detected in urine (at protein level). Elevated expression levels seen in the brain of patients with Alzheimer disease. Expressed by osteoblast-like cells in bone tissues and follicular dendritic cells in lymphoid tissues.

The protein resides in the cell membrane. It localises to the cytoplasm. The protein localises to the endoplasmic reticulum membrane. Its subcellular location is the secreted. Its function is as follows. Plays an important role in bone formation and normal bone mineralization. Promotes the differentiation of myoblasts into osteoblasts. May induce the commitment and differentiation of myoblasts into osteoblasts through an enhancement of BMP2 production and interaction with the BMP-RUNX2 pathway. Up-regulates the expression of ATF4, a transcription factor which plays a central role in osteoblast differentiation. Essential for normal spermatogenesis and late testicular differentiation. This chain is Transmembrane protein 119 (TMEM119), found in Homo sapiens (Human).